A 196-amino-acid chain; its full sequence is RNA-binding protein with multiple splicing (196 aa).

Met1 carries the post-translational modification N-acetylmethionine. The residue at position 12 (Thr12) is a Phosphothreonine. Residues 24–101 (RTLFVSGLPL…QTLRLEFAKA (78 aa)) enclose the RRM domain. The interaction with RNA stretch occupies residues 98-105 (FAKANTKM). Thr113 carries the phosphothreonine modification.

Homodimer; each protein chain binds one RNA molecule via the external surface of the homodimer. Interacts with RNA binding proteins MBNL1, RBFOX2, RBM4 and RBM14; the interaction allows cooperative assembly of stable cell-specific alternative splicing regulatory complexes. Interacts with SMAD2, SMAD3 and SMAD4; the interactions are direct. In terms of tissue distribution, ubiquitously expressed, at various levels depending on the isoform and the tissue. Strongly expressed in the heart, prostate, small intestine, large intestine, and ovary; moderately expressed in the placenta, lung, liver, kidney, pancreas, and testis; and poorly expressed in the skeletal muscle, spleen, thymus and peripheral leukocytes.

It localises to the nucleus. It is found in the cytoplasm. The protein localises to the stress granule. Its subcellular location is the P-body. Functionally, RNA binding protein that mediates the regulation of pre-mRNA alternative splicing (AS). Acts either as activator (FLNB, HSPG2, LIPA1, MYOCD, PTPRF and PPFIBP1) or repressor (TPM1, ACTN1, ITGA7, PIEZO1, LSM14B, MBNL1 and MBML2) of splicing events on specific pre-mRNA targets. Together with RNA binding proteins RBFOX2 and MBNL1/2, activates a splicing program associated with differentiated contractile vascular smooth muscle cells (SMC) by regulating AS of numerous pre-mRNA involved in actin cytoskeleton and focal adhesion machineries, suggesting a role in promoting a cell differentiated state. Binds to introns, exons and 3'-UTR associated with tandem CAC trinucleotide motifs separated by a variable spacer region, at a minimum as a dimer. The minimal length of RNA required for RBPMS-binding tandem CAC motifs is 15 nt, with spacing ranging from 1 to 9 nt. Can also bind to CA dinucleotide repeats. Mediates repression of TPM1 exon 3 by binding to CAC tandem repeats in the flanking intronic regions, followed by higher-order oligomerization and heterotypic interactions with other splicing regulators including MBNL1 and RBFOX2, which prevents assembly of ATP-dependent splicing complexes. In terms of biological role, acts as a regulator of pre-mRNA alternative splicing (AS). Binds mRNA. Regulates AS of ACTN1, FLNB, although with lower efficiency than isoform A / RBPMSA. Acts as coactivator of SMAD transcriptional activity in a TGFB1-dependent manner, possibly through increased phosphorylation of SMAD2 and SMAD3 at the C-terminal SSXS regions and promotion of the nuclear accumulation of SMAD proteins. This Homo sapiens (Human) protein is RNA-binding protein with multiple splicing.